Here is a 158-residue protein sequence, read N- to C-terminus: Cyclic pyranopterin monophosphate synthase (158 aa).

Substrate-binding positions include 76 to 78 and 114 to 115; these read LCH and ME. Residue Asp129 is part of the active site.

This sequence belongs to the MoaC family. In terms of assembly, homohexamer; trimer of dimers.

The catalysed reaction is (8S)-3',8-cyclo-7,8-dihydroguanosine 5'-triphosphate = cyclic pyranopterin phosphate + diphosphate. It functions in the pathway cofactor biosynthesis; molybdopterin biosynthesis. Its function is as follows. Catalyzes the conversion of (8S)-3',8-cyclo-7,8-dihydroguanosine 5'-triphosphate to cyclic pyranopterin monophosphate (cPMP). The chain is Cyclic pyranopterin monophosphate synthase from Shewanella baltica (strain OS223).